The chain runs to 469 residues: Glutamate--tRNA ligase 2 (469 aa).

Residues 8 to 18 (PSPTGFLHVGG) carry the 'HIGH' region motif. The 'KMSKS' region signature appears at 250-254 (KLSKR). Lys253 contacts ATP.

This sequence belongs to the class-I aminoacyl-tRNA synthetase family. Glutamate--tRNA ligase type 1 subfamily. Monomer.

It localises to the cytoplasm. It catalyses the reaction tRNA(Glu) + L-glutamate + ATP = L-glutamyl-tRNA(Glu) + AMP + diphosphate. In terms of biological role, catalyzes the attachment of glutamate to tRNA(Glu) in a two-step reaction: glutamate is first activated by ATP to form Glu-AMP and then transferred to the acceptor end of tRNA(Glu). The sequence is that of Glutamate--tRNA ligase 2 from Thermotoga petrophila (strain ATCC BAA-488 / DSM 13995 / JCM 10881 / RKU-1).